The chain runs to 429 residues: UPF0053 protein YugS (429 aa).

Transmembrane regions (helical) follow at residues 1–21 (MLILQLIAIFVLIGITAVFVA), 61–81 (ACQLGITITALGLGWLGEPTF), 101–121 (IVTFVVAFIIVTFLHVVMGEL), and 133–153 (AVSLWIAKPLIWFYKITYPFI). Residues 1 to 201 (MLILQLIAIF…YEKGEINQSE (201 aa)) form the CNNM transmembrane domain. 2 CBS domains span residues 220–281 (MIPR…PIKL) and 284–341 (IMRP…IRDE).

This sequence belongs to the UPF0053 family.

It localises to the cell membrane. This Bacillus subtilis (strain 168) protein is UPF0053 protein YugS (yugS).